The sequence spans 838 residues: Semaphorin-4G (838 aa).

The first 17 residues, 1 to 17, serve as a signal peptide directing secretion; the sequence is MWGRLWPLLLSILTATA. Topologically, residues 18 to 675 are extracellular; it reads VPGPSLRRPS…GAQLAPDVRL (658 aa). Residues 35–505 form the Sema domain; it reads RMTIPYEELS…APSGVIQLPL (471 aa). N-linked (GlcNAc...) asparagine glycans are attached at residues asparagine 55, asparagine 111, and asparagine 126. An intrachain disulfide couples cysteine 104 to cysteine 115. 3 cysteine pairs are disulfide-bonded: cysteine 133-cysteine 142, cysteine 270-cysteine 377, and cysteine 294-cysteine 337. Asparagine 388 carries N-linked (GlcNAc...) asparagine glycosylation. Residues 507–558 form the PSI domain; that stretch reads SCSRYRSCYDCILARDPYCGWDPGTHACAAATTIANRTALIQDIERGNRGCE. Cystine bridges form between cysteine 508-cysteine 525 and cysteine 517-cysteine 534. Asparagine 542 and asparagine 598 each carry an N-linked (GlcNAc...) asparagine glycan. One can recognise an Ig-like C2-type domain in the interval 567–649; that stretch reads PPLKTRSVLR…RTLLASYSLT (83 aa). Cysteine 584 and cysteine 632 are disulfide-bonded. A helical membrane pass occupies residues 676–696; that stretch reads LYVLAIAALGGLCLILASSLL. Topologically, residues 697 to 838 are cytoplasmic; that stretch reads YVACLREGRR…LVEQLDESSV (142 aa). The tract at residues 723–777 is disordered; the sequence is SAVQLQTVSGQCPGEEDEGDDEGAGGLEGSCLQIIPGEGAPAPPPPPPPPPPAEL. The span at 736-745 shows a compositional bias: acidic residues; that stretch reads GEEDEGDDEG. Positions 763-775 are enriched in pro residues; that stretch reads PAPPPPPPPPPPA. Serine 795 and serine 837 each carry phosphoserine.

It belongs to the semaphorin family. In terms of assembly, interacts with PLXNB2.

The protein localises to the cell membrane. Its function is as follows. Cell surface receptor for PLXNB2. May play a role in axon guidance. In Homo sapiens (Human), this protein is Semaphorin-4G (SEMA4G).